Reading from the N-terminus, the 252-residue chain is tRNA uridine(34) hydroxylase (252 aa).

Positions 129–223 (QGRPVVMLDT…YFEETGGKGF (95 aa)) constitute a Rhodanese domain. The Cysteine persulfide intermediate role is filled by Cys-183.

Belongs to the TrhO family.

The catalysed reaction is uridine(34) in tRNA + AH2 + O2 = 5-hydroxyuridine(34) in tRNA + A + H2O. In terms of biological role, catalyzes oxygen-dependent 5-hydroxyuridine (ho5U) modification at position 34 in tRNAs. The protein is tRNA uridine(34) hydroxylase of Bordetella petrii (strain ATCC BAA-461 / DSM 12804 / CCUG 43448).